A 225-amino-acid polypeptide reads, in one-letter code: Cold-regulated 413 inner membrane protein 1, chloroplastic (225 aa).

Residues 1 to 76 (MASLCLSSSR…RKRGSSVVCY (76 aa)) constitute a chloroplast transit peptide. Residue alanine 77 is a topological domain, stromal. Residues 78–98 (APISANSLQWISTISCLALML) form a helical membrane-spanning segment. Over 99 to 102 (ARGT) the chain is Chloroplast intermembrane. Residues 103 to 123 (GIHKSVVVPLFALHAPSSIVA) form a helical membrane-spanning segment. Residues 124 to 128 (WIKGE) lie on the Stromal side of the membrane. A helical transmembrane segment spans residues 129-149 (YGVWAAFLALIARLFFTFPGE). Residues 150-151 (LE) lie on the Chloroplast intermembrane side of the membrane. The chain crosses the membrane as a helical span at residues 152 to 172 (LPFIALLLVIVAPYQVMNIRG). At 173–175 (KQE) the chain is on the stromal side. A helical membrane pass occupies residues 176 to 196 (GAIIAIAISGFLAFQHFSRAG). Residues 197 to 204 (SLEKAYEK) are Chloroplast intermembrane-facing. Residues 205-225 (GSVLATVAIIGVTVVSLLLLL) traverse the membrane as a helical segment.

This sequence belongs to the Cold-regulated 413 protein family.

Its subcellular location is the plastid. The protein resides in the chloroplast inner membrane. The chain is Cold-regulated 413 inner membrane protein 1, chloroplastic (COR413IM1) from Arabidopsis thaliana (Mouse-ear cress).